The following is a 747-amino-acid chain: Catalase-peroxidase (747 aa).

An N-terminal signal peptide occupies residues 1 to 27 (MRKFSVSKVALLAATMAPALLPAAARA). Residues 116-238 (WHSAGTYRTA…LAAVQMGLIY (123 aa)) constitute a cross-link (tryptophyl-tyrosyl-methioninium (Trp-Tyr) (with M-264)). The active-site Proton acceptor is the His117. The tryptophyl-tyrosyl-methioninium (Tyr-Met) (with W-116) cross-link spans 238 to 264 (YVNPEGPNGNPDPLLAAKDIRETFGRM). Residue His279 participates in heme b binding.

This sequence belongs to the peroxidase family. Peroxidase/catalase subfamily. Homodimer or homotetramer. Requires heme b as cofactor. Post-translationally, formation of the three residue Trp-Tyr-Met cross-link is important for the catalase, but not the peroxidase activity of the enzyme.

It carries out the reaction H2O2 + AH2 = A + 2 H2O. It catalyses the reaction 2 H2O2 = O2 + 2 H2O. Bifunctional enzyme with both catalase and broad-spectrum peroxidase activity. The chain is Catalase-peroxidase from Novosphingobium aromaticivorans (strain ATCC 700278 / DSM 12444 / CCUG 56034 / CIP 105152 / NBRC 16084 / F199).